The following is a 245-amino-acid chain: Flavin-dependent thymidylate synthase (245 aa).

Residues 5–210 (IRVKLVNYTK…ELRPIIKWAK (206 aa)) enclose the ThyX domain. FAD contacts are provided by residues Ser-59, 83-85 (RHR), and Gln-91. Residues 80–83 (QLVR), 91–95 (QQSQR), and Arg-149 each bind dUMP. The short motif at 83–93 (RHRLASYTQQS) is the ThyX motif element. FAD is bound by residues 165–167 (NLR) and His-171. Arg-176 contributes to the dUMP binding site. Residue Arg-176 is the Involved in ionization of N3 of dUMP, leading to its activation of the active site.

Belongs to the thymidylate synthase ThyX family. Homotetramer. It depends on FAD as a cofactor.

It carries out the reaction dUMP + (6R)-5,10-methylene-5,6,7,8-tetrahydrofolate + NADPH + H(+) = dTMP + (6S)-5,6,7,8-tetrahydrofolate + NADP(+). The protein operates within pyrimidine metabolism; dTTP biosynthesis. Catalyzes the reductive methylation of 2'-deoxyuridine-5'-monophosphate (dUMP) to 2'-deoxythymidine-5'-monophosphate (dTMP) while utilizing 5,10-methylenetetrahydrofolate (mTHF) as the methyl donor, and NADPH and FADH(2) as the reductant. The sequence is that of Flavin-dependent thymidylate synthase from Thermococcus kodakarensis (strain ATCC BAA-918 / JCM 12380 / KOD1) (Pyrococcus kodakaraensis (strain KOD1)).